Here is a 42-residue protein sequence, read N- to C-terminus: Photosystem I reaction center subunit IX (42 aa).

A helical membrane pass occupies residues 8–28 (YLSTAPVIGVLWMTFTAGFII).

The protein belongs to the PsaJ family.

It localises to the plastid. The protein localises to the chloroplast thylakoid membrane. Functionally, may help in the organization of the PsaE and PsaF subunits. The sequence is that of Photosystem I reaction center subunit IX from Pyropia yezoensis (Susabi-nori).